An 870-amino-acid chain; its full sequence is MASLTPMMQQYLEIKEQYKDCILFFRLGDFYEMFFSDAEVASRELEITLTGKDCGLEERAPMCGVPFHSADSYIAKLISKGYKVAICEQIEDPALAKGLVKRDVIRIVTPGTVTDSAMLDEKKNNYLMSIYKNKNYYGIACVDLTTGEFLSTHITFGNTFNKLMDEIAKFSPSEIVVNGEFFHDENIKKTLKQRFDVYISGLEDKFFEKEFSIQKVRNYFKDYVIEENAFDLYINASGALLEYLEQTQKVNLSHIQNFNVYRIEEYMILDMATRRNLELTETMREKNRKGSLLWVLDRTMTSMGGRTLRKWIEQPLINLHDIKDRLDAVNEFKERFMIRSEVRELLRAVYDIERLMTKVILGSANCRDLISIKHSIGQVPYIKELLRDLKADLNVLSYNELDTLTDVYEIIDKAIVDDPPVAVKEGGIIKEGFNEEVDRLRSASKDGKKWIAHLESKERERTGIKNLKVGFNKVFGYYIEVTKSYYSQVPDDYIRKQTLANCERYITPELKEIENTVLGAEDRLVELEYQIFVDVRNKVAKEINRLKTTARSLARIDVLCSLAEVADRESYTMPEVTDDDKIEIKDGRHPVVEKIIGQEAFVPNDTYLDMDENQIAIITGPNMAGKSTYMRQVALIVLMAQIGSFVPAKSAKIGIVDRIFTRVGASDDLAAGQSTFMVEMSEVANILGNATSKSLLVLDEIGRGTSTYDGLSIAWAVIEYIGEKIGARTLFATHYHELTELEERIEGIKNYCISVEEKGEDIIFLRKILRGGADNSYGVQVARLAGIPDPVIHRAKEILKKLEDADITRKEKRITRRKQPIEGQIDVFTFNAAQRSYDEVLNELKSLDITTLTPLDAINVLYNLQKKVKG.

620–627 (GPNMAGKS) contributes to the ATP binding site.

It belongs to the DNA mismatch repair MutS family.

This protein is involved in the repair of mismatches in DNA. It is possible that it carries out the mismatch recognition step. This protein has a weak ATPase activity. This Acetivibrio thermocellus (strain ATCC 27405 / DSM 1237 / JCM 9322 / NBRC 103400 / NCIMB 10682 / NRRL B-4536 / VPI 7372) (Clostridium thermocellum) protein is DNA mismatch repair protein MutS.